The primary structure comprises 228 residues: ATP-dependent dethiobiotin synthetase BioD 1 (228 aa).

Position 13 to 18 (13 to 18 (EVGKTV)) interacts with ATP. Thr-17 contributes to the Mg(2+) binding site. Lys-38 is an active-site residue. Ser-42 provides a ligand contact to substrate. ATP-binding positions include Asp-55, 116-119 (EGAG), 176-177 (ND), and 205-207 (PWL). Mg(2+) contacts are provided by Asp-55 and Glu-116.

Belongs to the dethiobiotin synthetase family. Homodimer. The cofactor is Mg(2+).

It localises to the cytoplasm. The catalysed reaction is (7R,8S)-7,8-diammoniononanoate + CO2 + ATP = (4R,5S)-dethiobiotin + ADP + phosphate + 3 H(+). Its pathway is cofactor biosynthesis; biotin biosynthesis; biotin from 7,8-diaminononanoate: step 1/2. Functionally, catalyzes a mechanistically unusual reaction, the ATP-dependent insertion of CO2 between the N7 and N8 nitrogen atoms of 7,8-diaminopelargonic acid (DAPA, also called 7,8-diammoniononanoate) to form a ureido ring. This chain is ATP-dependent dethiobiotin synthetase BioD 1, found in Salmonella typhi.